The sequence spans 535 residues: Dynein axonemal assembly factor 8 (535 aa).

Disordered stretches follow at residues 112 to 215, 228 to 267, 344 to 380, 395 to 444, and 461 to 535; these read AELA…QERR, RDACGPASSDQGGVKEAPCHAVESAARSKMPLAEPPEGPP, PADTPQDTEEAGAGSRCSSRKPGSEAGPGPQLAQGMR, TVPP…LRSC, and IAQP…LDQL. A compositionally biased stretch (basic and acidic residues) spans 125-139; that stretch reads RTKDASSQEGRDPGR. Polar residues predominate over residues 166 to 175; sequence GSLSFNTKGS. Phosphoserine is present on Ser-175. At Ser-362 the chain carries Phosphoserine. The span at 415–424 shows a compositional bias: acidic residues; the sequence is DSEEEEEEVE. Polar residues predominate over residues 435–444; sequence SPSSLGLRSC.

Its subcellular location is the dynein axonemal particle. It is found in the cytoplasm. Functionally, in cyliated cells, dynein axonemal particle-specific protein required for deployment of ODA to the axoneme. Interacts with outer dynein arm (ODA) subunits. The sequence is that of Dynein axonemal assembly factor 8 (DNAAF8) from Macaca fascicularis (Crab-eating macaque).